The following is a 92-amino-acid chain: Small ribosomal subunit protein uS19c (92 aa).

It belongs to the universal ribosomal protein uS19 family.

The protein resides in the plastid. The protein localises to the chloroplast. Protein S19 forms a complex with S13 that binds strongly to the 16S ribosomal RNA. This chain is Small ribosomal subunit protein uS19c, found in Calycanthus floridus var. glaucus (Eastern sweetshrub).